A 150-amino-acid polypeptide reads, in one-letter code: UPF0260 protein VIBHAR_03078 (150 aa).

Belongs to the UPF0260 family.

The protein is UPF0260 protein VIBHAR_03078 of Vibrio campbellii (strain ATCC BAA-1116).